Reading from the N-terminus, the 225-residue chain is Orotate phosphoribosyltransferase (225 aa).

Lys29 contributes to the 5-phospho-alpha-D-ribose 1-diphosphate binding site. 37 to 38 is an orotate binding site; that stretch reads FF. 5-phospho-alpha-D-ribose 1-diphosphate-binding positions include 75–76, Arg101, Lys102, Lys105, His107, and 126–134; these read YK and DDVISAGTS. The orotate site is built by Ser130 and Arg158.

The protein belongs to the purine/pyrimidine phosphoribosyltransferase family. PyrE subfamily. In terms of assembly, homodimer. The cofactor is Mg(2+).

It carries out the reaction orotidine 5'-phosphate + diphosphate = orotate + 5-phospho-alpha-D-ribose 1-diphosphate. It participates in pyrimidine metabolism; UMP biosynthesis via de novo pathway; UMP from orotate: step 1/2. Its function is as follows. Catalyzes the transfer of a ribosyl phosphate group from 5-phosphoribose 1-diphosphate to orotate, leading to the formation of orotidine monophosphate (OMP). This chain is Orotate phosphoribosyltransferase, found in Ralstonia pickettii (strain 12J).